Reading from the N-terminus, the 61-residue chain is Photosystem II reaction center X protein (61 aa).

A helical membrane pass occupies residues 26-46 (IGSFIAAALLIVIPATAFLIF).

The protein belongs to the PsbX family. Type 2 subfamily. As to quaternary structure, PSII consists of a core antenna complex that captures photons, and an electron transfer chain that converts photonic excitation into a charge separation. PSII forms dimeric complexes.

The protein resides in the cellular thylakoid membrane. Involved in the binding and/or turnover of quinones at the Q(B) site of Photosystem II. This Prochlorococcus marinus (strain MIT 9301) protein is Photosystem II reaction center X protein.